Reading from the N-terminus, the 205-residue chain is Outer-membrane lipoprotein LolB (205 aa).

Positions 1–17 are cleaved as a signal peptide; sequence MFLRHCITFTLIALLAG. C18 carries N-palmitoyl cysteine lipidation. Residue C18 is the site of S-diacylglycerol cysteine attachment.

The protein belongs to the LolB family. As to quaternary structure, monomer.

The protein resides in the cell outer membrane. Plays a critical role in the incorporation of lipoproteins in the outer membrane after they are released by the LolA protein. This chain is Outer-membrane lipoprotein LolB, found in Pseudomonas putida (strain ATCC 47054 / DSM 6125 / CFBP 8728 / NCIMB 11950 / KT2440).